The primary structure comprises 63 residues: MHLQVYIVNGKRQYTLKKMDPEGKPTLSAHPARFSPDDKYSRHRITIKRRFKALKSEKRPKPL.

Positions 18–40 (KMDPEGKPTLSAHPARFSPDDKY) are disordered.

It belongs to the NOP10 family. In terms of assembly, component of the small nucleolar ribonucleoprotein particles containing H/ACA-type snoRNAs (H/ACA snoRNPs).

The protein resides in the nucleus. It is found in the nucleolus. In terms of biological role, required for ribosome biogenesis. Part of a complex which catalyzes pseudouridylation of rRNA. This involves the isomerization of uridine such that the ribose is subsequently attached to C5, instead of the normal N1. Pseudouridine ('psi') residues may serve to stabilize the conformation of rRNAs. The protein is H/ACA ribonucleoprotein complex subunit 3-like protein of Trypanosoma cruzi.